A 125-amino-acid polypeptide reads, in one-letter code: Small ribosomal subunit protein uS13 (125 aa).

It belongs to the universal ribosomal protein uS13 family. As to quaternary structure, part of the 30S ribosomal subunit. Forms a loose heterodimer with protein S19. Forms two bridges to the 50S subunit in the 70S ribosome.

In terms of biological role, located at the top of the head of the 30S subunit, it contacts several helices of the 16S rRNA. In the 70S ribosome it contacts the 23S rRNA (bridge B1a) and protein L5 of the 50S subunit (bridge B1b), connecting the 2 subunits; these bridges are implicated in subunit movement. Contacts the tRNAs in the A and P-sites. The sequence is that of Small ribosomal subunit protein uS13 from Gluconacetobacter diazotrophicus (strain ATCC 49037 / DSM 5601 / CCUG 37298 / CIP 103539 / LMG 7603 / PAl5).